A 230-amino-acid polypeptide reads, in one-letter code: Demethylluteothin O-methyltransferase (230 aa).

It belongs to the methyltransferase superfamily.

The catalysed reaction is demethylluteothin + S-adenosyl-L-methionine = luteothin + S-adenosyl-L-homocysteine. It functions in the pathway antibiotic biosynthesis. The protein operates within polyketide biosynthesis. Its function is as follows. Methyltransferase involved in the biosynthesis of the antibiotic aureothin, a nitroaryl polyketide metabolite with antifungal, cytotoxic and insecticidal activities. Catalyzes the methylation of demethylluteothin to luteothin (also called deoxyaureothin). Is specific for its gamma-pyrone substrate, and does not act on the alpha-pyrone isomer. This Streptomyces thioluteus protein is Demethylluteothin O-methyltransferase.